Here is a 427-residue protein sequence, read N- to C-terminus: Septin-6 (427 aa).

Ala2 carries the post-translational modification N-acetylalanine. Ser27 carries the post-translational modification Phosphoserine. Residues Gln39–Glu305 form the Septin-type G domain. The interval Gly49–Ser56 is G1 motif. GTP contacts are provided by residues Gly49–Ser56, Gly104, Lys185–Glu193, Gly239, and Arg254. The segment at Ser101–Gly104 is G3 motif. Positions Ala184–Asp187 are G4 motif. Residues Gln321–Ser416 are a coiled coil. Lys367 carries the post-translational modification N6-acetyllysine. The disordered stretch occupies residues Leu405–Asn427. The span at Gln407–Gln417 shows a compositional bias: low complexity. Ser416 carries the post-translational modification Phosphoserine. Thr418 carries the phosphothreonine modification.

Belongs to the TRAFAC class TrmE-Era-EngA-EngB-Septin-like GTPase superfamily. Septin GTPase family. Septins polymerize into heterooligomeric protein complexes that form filaments, and associate with cellular membranes, actin filaments and microtubules. GTPase activity is required for filament formation. Filaments are assembled from asymmetrical heterotrimers, composed of SEPTIN2, SEPTIN6 and SEPTIN7 that associate head-to-head to form a hexameric unit. Within the trimer, directly interacts with SEPTIN2 and SEPTIN7. Also interacts with SEPTIN9 and SEPTIN12. Interaction with SEPTIN12 alters filament structure. Component of a septin core octameric complex consisting of SEPTIN12, SEPTIN7, SEPTIN6 and SEPTIN2 or SEPTIN4 in the order 12-7-6-2-2-6-7-12 or 12-7-6-4-4-6-7-12 and located in the sperm annulus. Interacts with SOCS7. Interacts with HNRNPA1.

It localises to the cytoplasm. The protein localises to the cytoskeleton. The protein resides in the spindle. It is found in the chromosome. Its subcellular location is the centromere. It localises to the kinetochore. The protein localises to the cleavage furrow. The protein resides in the midbody. It is found in the cell projection. Its subcellular location is the cilium. It localises to the flagellum. Filament-forming cytoskeletal GTPase. Required for normal organization of the actin cytoskeleton. Involved in cytokinesis. Forms a filamentous structure with SEPTIN12, SEPTIN6, SEPTIN2 and probably SEPTIN4 at the sperm annulus which is required for the structural integrity and motility of the sperm tail during postmeiotic differentiation. This chain is Septin-6, found in Bos taurus (Bovine).